Consider the following 271-residue polypeptide: Neurexophilin-1 (271 aa).

The N-terminal stretch at 1–21 (MQAACWYVLLLLQPTVYLVTC) is a signal peptide. Positions 22–97 (ANLTNGGKSE…WDWLRNSTDL (76 aa)) are II. 6 N-linked (GlcNAc...) asparagine glycosylation sites follow: Asn23, Asn68, Asn93, Asn146, Asn156, and Asn162. The tract at residues 98–176 (QEPRPRAKRR…LVPPTKIVEF (79 aa)) is III. The segment at 177–185 (DLAQQTVID) is IV (linker domain). The v (Cys-rich) stretch occupies residues 186–271 (AKDSKSFNCR…HSDTPYFPSG (86 aa)).

Belongs to the neurexophilin family. Post-translationally, may be proteolytically processed at the boundary between the N-terminal non-conserved and the central conserved domain in neuron-like cells. In terms of tissue distribution, brain, only in a scattered subpopulation of neurons that probably represent inhibitory interneurons.

It localises to the secreted. Functionally, may be signaling molecules that resemble neuropeptides. Ligand for alpha-neurexins. This is Neurexophilin-1 (Nxph1) from Mus musculus (Mouse).